A 318-amino-acid chain; its full sequence is Putative S-adenosyl-L-methionine-dependent methyltransferase MMAR_1595 (318 aa).

Residues glutamate 132 and 161-162 (DL) contribute to the S-adenosyl-L-methionine site.

The protein belongs to the UPF0677 family.

Its function is as follows. Exhibits S-adenosyl-L-methionine-dependent methyltransferase activity. In Mycobacterium marinum (strain ATCC BAA-535 / M), this protein is Putative S-adenosyl-L-methionine-dependent methyltransferase MMAR_1595.